The chain runs to 164 residues: Phosphopantetheine adenylyltransferase (164 aa).

Residue threonine 10 coordinates substrate. ATP is bound by residues 10–11 and histidine 18; that span reads TF. 3 residues coordinate substrate: lysine 42, leucine 74, and arginine 88. ATP contacts are provided by residues 89 to 91, glutamate 99, and 124 to 130; these read GIR and NSFISST.

This sequence belongs to the bacterial CoaD family. Homohexamer. Mg(2+) is required as a cofactor.

Its subcellular location is the cytoplasm. It catalyses the reaction (R)-4'-phosphopantetheine + ATP + H(+) = 3'-dephospho-CoA + diphosphate. Its pathway is cofactor biosynthesis; coenzyme A biosynthesis; CoA from (R)-pantothenate: step 4/5. In terms of biological role, reversibly transfers an adenylyl group from ATP to 4'-phosphopantetheine, yielding dephospho-CoA (dPCoA) and pyrophosphate. The protein is Phosphopantetheine adenylyltransferase of Pseudoalteromonas translucida (strain TAC 125).